A 362-amino-acid chain; its full sequence is Inactive 2'-5' oligoadenylate synthetase 1C (362 aa).

Belongs to the 2-5A synthase family. In terms of tissue distribution, expressed at highest level in brain with lesser amounts in spleen, kidney, stomach, liver, intestine, ovary, skin and testis. Not detected in lung, thymus, heart and uterus.

Does not have 2'-5'-OAS activity, but can bind double-stranded RNA. The protein is Inactive 2'-5' oligoadenylate synthetase 1C of Mus musculus (Mouse).